Here is a 483-residue protein sequence, read N- to C-terminus: GTPase Der (483 aa).

EngA-type G domains are found at residues 3-167 (FTLA…GEER) and 212-387 (LRIA…EIWN). Residues 9 to 16 (GRPNVGKS), 56 to 60 (DTAGL), 119 to 122 (NKAE), 218 to 225 (GRPNAGKS), 265 to 269 (DTAGM), and 330 to 333 (NKWD) contribute to the GTP site. The KH-like domain maps to 388 to 472 (RRISTGRLNR…PIRLSLRTSD (85 aa)).

The protein belongs to the TRAFAC class TrmE-Era-EngA-EngB-Septin-like GTPase superfamily. EngA (Der) GTPase family. In terms of assembly, associates with the 50S ribosomal subunit.

Functionally, GTPase that plays an essential role in the late steps of ribosome biogenesis. This chain is GTPase Der, found in Brucella suis biovar 1 (strain 1330).